Here is a 66-residue protein sequence, read N- to C-terminus: Large ribosomal subunit protein bL33c (66 aa).

This sequence belongs to the bacterial ribosomal protein bL33 family.

The protein localises to the plastid. It is found in the chloroplast. This is Large ribosomal subunit protein bL33c from Barbarea verna (Land cress).